We begin with the raw amino-acid sequence, 171 residues long: CDP-archaeol synthase (171 aa).

The next 4 helical transmembrane spans lie at 11 to 31 (VLYVIYFMLPAYMANISGLVF), 65 to 85 (VGLVVGIIQGLLSGSIIIGVI), 129 to 149 (LILVSPIVVLPIDYIILIMLI), and 151 to 171 (LVLHLSANIIAYLLGMKDVWY).

The protein belongs to the CDP-archaeol synthase family. Mg(2+) serves as cofactor.

The protein resides in the cell membrane. The catalysed reaction is 2,3-bis-O-(geranylgeranyl)-sn-glycerol 1-phosphate + CTP + H(+) = CDP-2,3-bis-O-(geranylgeranyl)-sn-glycerol + diphosphate. Its pathway is membrane lipid metabolism; glycerophospholipid metabolism. In terms of biological role, catalyzes the formation of CDP-2,3-bis-(O-geranylgeranyl)-sn-glycerol (CDP-archaeol) from 2,3-bis-(O-geranylgeranyl)-sn-glycerol 1-phosphate (DGGGP) and CTP. This reaction is the third ether-bond-formation step in the biosynthesis of archaeal membrane lipids. The chain is CDP-archaeol synthase from Methanothermobacter thermautotrophicus (strain ATCC 29096 / DSM 1053 / JCM 10044 / NBRC 100330 / Delta H) (Methanobacterium thermoautotrophicum).